The following is a 90-amino-acid chain: Small ribosomal subunit protein bS16 (90 aa).

The protein belongs to the bacterial ribosomal protein bS16 family.

This is Small ribosomal subunit protein bS16 from Moorella thermoacetica (strain ATCC 39073 / JCM 9320).